We begin with the raw amino-acid sequence, 235 residues long: Voltage-gated hydrogen channel 1 (235 aa).

At 1 to 62 (MSRYLKHFTV…VMKKLFSSRR (62 aa)) the chain is on the cytoplasmic side. Residues 63 to 83 (FQIVIVFLVIVDALLVLGELL) traverse the membrane as a helical segment. Residues 84–100 (MDLKIIHPDKYHIAPKV) are Extracellular-facing. The chain crosses the membrane as a helical span at residues 101 to 123 (FHYLSLSILTIFLVEVGFKIFVY). At 124-131 (GREFFHHK) the chain is on the cytoplasmic side. Residues 132-152 (FEVLDSIVVVVSFILDLVLLF) form a helical membrane-spanning segment. The Extracellular segment spans residues 153–159 (REHEFEA). The chain crosses the membrane as a helical span at residues 160–180 (VGLLILLRLWRVARIINGIIL). Over 181-235 (SVKTRSEQQVSKLKQVNLKLATKVEQLQHSCVEKEQEIERLTRMLKQHGLLSEQT) the chain is Cytoplasmic. A coiled-coil region spans residues 187–228 (EQQVSKLKQVNLKLATKVEQLQHSCVEKEQEIERLTRMLKQH).

Belongs to the hydrogen channel family. Homodimer.

The protein resides in the membrane. It is found in the cell membrane. Mediates the voltage-dependent proton permeability of excitable membranes. Forms a proton-selective channel through which protons may pass in accordance with their electrochemical gradient. This chain is Voltage-gated hydrogen channel 1 (HVCN1), found in Gallus gallus (Chicken).